Reading from the N-terminus, the 92-residue chain is Small ribosomal subunit protein uS19 (92 aa).

The protein belongs to the universal ribosomal protein uS19 family.

Protein S19 forms a complex with S13 that binds strongly to the 16S ribosomal RNA. The protein is Small ribosomal subunit protein uS19 of Cereibacter sphaeroides (strain ATCC 17029 / ATH 2.4.9) (Rhodobacter sphaeroides).